The chain runs to 157 residues: Transcription elongation factor GreA (157 aa).

Positions 10-76 form a coiled coil; it reads THEGKQKLEQ…TLENMIRNAK (67 aa).

The protein belongs to the GreA/GreB family.

Functionally, necessary for efficient RNA polymerase transcription elongation past template-encoded arresting sites. The arresting sites in DNA have the property of trapping a certain fraction of elongating RNA polymerases that pass through, resulting in locked ternary complexes. Cleavage of the nascent transcript by cleavage factors such as GreA or GreB allows the resumption of elongation from the new 3'terminus. GreA releases sequences of 2 to 3 nucleotides. This is Transcription elongation factor GreA from Bacillus velezensis (strain DSM 23117 / BGSC 10A6 / LMG 26770 / FZB42) (Bacillus amyloliquefaciens subsp. plantarum).